The primary structure comprises 129 residues: UPF0102 protein Clim_0016 (129 aa).

It belongs to the UPF0102 family.

The polypeptide is UPF0102 protein Clim_0016 (Chlorobium limicola (strain DSM 245 / NBRC 103803 / 6330)).